Here is a 424-residue protein sequence, read N- to C-terminus: L-glutamine:2-deoxy-scyllo-inosose aminotransferase (424 aa).

An N6-(pyridoxal phosphate)lysine modification is found at lysine 202.

The protein belongs to the DegT/DnrJ/EryC1 family. L-glutamine:2-deoxy-scyllo-inosose/scyllo-inosose aminotransferase subfamily. Pyridoxal 5'-phosphate serves as cofactor.

It carries out the reaction 2-deoxy-L-scyllo-inosose + L-glutamine = 2-deoxy-scyllo-inosamine + 2-oxoglutaramate. The enzyme catalyses 3-amino-2,3-dideoxy-scyllo-inosose + L-glutamine = 2-deoxystreptamine + 2-oxoglutaramate. Its pathway is metabolic intermediate biosynthesis; 2-deoxystreptamine biosynthesis; 2-deoxystreptamine from D-glucose 6-phosphate: step 2/4. It functions in the pathway metabolic intermediate biosynthesis; 2-deoxystreptamine biosynthesis; 2-deoxystreptamine from D-glucose 6-phosphate: step 4/4. The protein operates within antibiotic biosynthesis; ribostamycin biosynthesis. Catalyzes the PLP-dependent transamination of 2-deoxy-scyllo-inosose (2-DOI) to form 2-deoxy-scyllo-inosamine (2-DOIA) using L-glutamine as the amino donor. Also catalyzes the transamination of 3-amino-2,3-dideoxy-scyllo-inosose (keto-2-DOIA) into 2-deoxystreptamine (2-DOS). The polypeptide is L-glutamine:2-deoxy-scyllo-inosose aminotransferase (rbmB) (Streptomyces ribosidificus).